Reading from the N-terminus, the 165-residue chain is Zinc finger C2H2 protein ECU11_0990 (165 aa).

Basic and acidic residues-rich tracts occupy residues 1–10 and 19–32; these read MEAESPKERV and DPERGVKEREDTSS. Residues 1 to 38 are disordered; sequence MEAESPKERVQGVSGESWDPERGVKEREDTSSKKGKGV. 2 consecutive C2H2-type zinc fingers follow at residues 103 to 125 and 136 to 158; these read FGCESCEEVFDSFKKLQLHKAQH and LFCPVCKKTFDEKRKLMLHSRYH.

The sequence is that of Zinc finger C2H2 protein ECU11_0990 from Encephalitozoon cuniculi (strain GB-M1) (Microsporidian parasite).